The following is a 1941-amino-acid chain: Integrin beta-like protein B (1941 aa).

The first 20 residues, 1-20 (MKNIIKYLFIFLCFLIITEA), serve as a signal peptide directing secretion. At 21-1871 (THFRYGTISW…VTTQNSSNKT (1851 aa)) the chain is on the extracellular side. The region spanning 420-457 (YGDKCTVLPPCKNGVPNGGVNGDGKCLCNNGWTGSDCS) is the EGF-like domain. Cystine bridges form between C430–C445 and C447–C456. One can recognise a VWFA domain in the interval 513-696 (DVYLLVDANM…AGIKAVSSKL (184 aa)). N1400, N1505, N1530, N1606, N1652, N1738, N1777, N1848, N1866, and N1869 each carry an N-linked (GlcNAc...) asparagine glycan. A helical membrane pass occupies residues 1872 to 1892 (VLSGAIAGAAAGTALIAAAMW). Residues 1893–1941 (KMLRKAAPPTDAFFDEGAFLGDGVNSNPMYQESKNGGENPLYLASNETL) are Cytoplasmic-facing. The segment at 1921 to 1941 (MYQESKNGGENPLYLASNETL) is disordered.

The protein belongs to the SIB family. Interacts with talA/talin.

It is found in the membrane. Functionally, implicated in cellular adhesion. In Dictyostelium discoideum (Social amoeba), this protein is Integrin beta-like protein B (sibB).